The following is a 122-amino-acid chain: Basic phospholipase A2 homolog ecarpholin S (122 aa).

7 cysteine pairs are disulfide-bonded: cysteine 26/cysteine 115, cysteine 28/cysteine 44, cysteine 43/cysteine 95, cysteine 49/cysteine 122, cysteine 50/cysteine 88, cysteine 57/cysteine 81, and cysteine 75/cysteine 86. The tract at residues 105–117 is important for membrane-damaging activities in eukaryotes and bacteria; heparin-binding; the sequence is KKYTYYPNFWCKG.

As to expression, expressed by the venom gland.

Its subcellular location is the secreted. Suramin inhibits the myotoxic activity. Snake venom phospholipase A2 homolog that lacks enzymatic activity. Shows high myotoxin activities and displays edema-inducing activities. The polypeptide is Basic phospholipase A2 homolog ecarpholin S (Echis carinatus (Saw-scaled viper)).